Here is a 522-residue protein sequence, read N- to C-terminus: Tyrosine-protein phosphatase 1 (522 aa).

The tract at residues 32–63 is disordered; sequence RSNSSISLSSSSHSSFSRMGSLGSLPTNSGSS. The span at 33-63 shows a compositional bias: low complexity; sequence SNSSISLSSSSHSSFSRMGSLGSLPTNSGSS. The region spanning 97–471 is the Tyrosine-protein phosphatase domain; the sequence is IKEEFRLLEE…LFCYKTILDE (375 aa). Cys310 functions as the Phosphocysteine intermediate in the catalytic mechanism. The interval 327-426 is PTPase insert (Asn-rich); that stretch reads MKKLDHYFKQ…DDAAESDLKY (100 aa). Low complexity predominate over residues 382 to 410; it reads NNNNNNNLNNNNNINNNSNGSNNTPQTEP. The segment at 382–420 is disordered; the sequence is NNNNNNNLNNNNNINNNSNGSNNTPQTEPNNEEDDDDAA. Over residues 411–420 the composition is skewed to acidic residues; it reads NNEEDDDDAA.

It belongs to the protein-tyrosine phosphatase family. Non-receptor class subfamily. As to expression, expressed predominantly in anterior-like cells and to a lesser degree in prestalk cells.

Its subcellular location is the cytoplasm. The protein localises to the cell membrane. The catalysed reaction is O-phospho-L-tyrosyl-[protein] + H2O = L-tyrosyl-[protein] + phosphate. In terms of biological role, may have a role in growth and in the early stages of development. Affects the timing of development. In Dictyostelium discoideum (Social amoeba), this protein is Tyrosine-protein phosphatase 1 (ptpA1-1).